The following is a 357-amino-acid chain: UDP-N-acetylglucosamine 2-epimerase homolog (357 aa).

Belongs to the UDP-N-acetylglucosamine 2-epimerase family.

The protein is UDP-N-acetylglucosamine 2-epimerase homolog of Methanococcus maripaludis (strain DSM 14266 / JCM 13030 / NBRC 101832 / S2 / LL).